Here is a 414-residue protein sequence, read N- to C-terminus: Serine/threonine transporter SstT (414 aa).

Topologically, residues 2–15 (TTQRSPGLFRRLAH) are cytoplasmic. A helical membrane pass occupies residues 16-36 (GSLVKQILVGLVLGILLAWIS). The Periplasmic portion of the chain corresponds to 37-45 (KPAAEAVGL). The chain crosses the membrane as a helical span at residues 46 to 66 (LGTLFVGALKAVAPILVLMLV). Residues 67–83 (MASIANHQHGQKTNIRP) are Cytoplasmic-facing. Residues 84 to 104 (ILFLYLLGTFSAALAAVVFSF) form a helical membrane-spanning segment. Topologically, residues 105-142 (AFPSTLHLSSSAGDISPPSGIVEVMRGLVMSMVSNPID) are periplasmic. Residues 143-163 (ALLKGNYIGILVWAIGLGFAL) form a helical membrane-spanning segment. Residues 164–179 (RHGNETTKNLVNDMSN) are Cytoplasmic-facing. The helical transmembrane segment at 180–200 (AVTFMVKLVIRFAPIGIFGLV) threads the bilayer. Topologically, residues 201-217 (SSTLATTGFSTLWGYAQ) are periplasmic. The helical transmembrane segment at 218 to 238 (LLVVLVGCMLLVALVVNPLLV) threads the bilayer. The Cytoplasmic segment spans residues 239–299 (WWKIRRNPFP…VSIPLGATIN (61 aa)). The helical transmembrane segment at 300 to 320 (MAGAAITITVLTLAAVNTLGI) threads the bilayer. The Periplasmic portion of the chain corresponds to 321–331 (PVDLPTALLLS). Residues 332–352 (VVASLCACGASGVAGGSLLLI) traverse the membrane as a helical segment. Topologically, residues 353–414 (PLACNMFGIS…DRLANSALRN (62 aa)) are cytoplasmic.

It belongs to the dicarboxylate/amino acid:cation symporter (DAACS) (TC 2.A.23) family.

It localises to the cell inner membrane. The catalysed reaction is L-serine(in) + Na(+)(in) = L-serine(out) + Na(+)(out). It carries out the reaction L-threonine(in) + Na(+)(in) = L-threonine(out) + Na(+)(out). Functionally, involved in the import of serine and threonine into the cell, with the concomitant import of sodium (symport system). The protein is Serine/threonine transporter SstT of Shigella flexneri serotype 5b (strain 8401).